The primary structure comprises 508 residues: Photosystem II CP47 reaction center protein (508 aa).

6 consecutive transmembrane segments (helical) span residues 21–36 (SVHI…WAGS), 101–115 (IVFS…IWHW), 140–156 (GIHL…FGAF), 203–218 (IAAG…FHLS), 237–252 (VLSS…AFVV), and 457–472 (TFAL…HGAR).

It belongs to the PsbB/PsbC family. PsbB subfamily. As to quaternary structure, PSII is composed of 1 copy each of membrane proteins PsbA, PsbB, PsbC, PsbD, PsbE, PsbF, PsbH, PsbI, PsbJ, PsbK, PsbL, PsbM, PsbT, PsbX, PsbY, PsbZ, Psb30/Ycf12, at least 3 peripheral proteins of the oxygen-evolving complex and a large number of cofactors. It forms dimeric complexes. Requires Binds multiple chlorophylls. PSII binds additional chlorophylls, carotenoids and specific lipids. as cofactor.

Its subcellular location is the plastid. It is found in the chloroplast thylakoid membrane. Functionally, one of the components of the core complex of photosystem II (PSII). It binds chlorophyll and helps catalyze the primary light-induced photochemical processes of PSII. PSII is a light-driven water:plastoquinone oxidoreductase, using light energy to abstract electrons from H(2)O, generating O(2) and a proton gradient subsequently used for ATP formation. In Zea mays (Maize), this protein is Photosystem II CP47 reaction center protein.